A 136-amino-acid chain; its full sequence is Large ribosomal subunit protein uL16 (136 aa).

Residues 1–17 (MLQPKRTKFRKRHKGRN) are compositionally biased toward basic residues. The interval 1–21 (MLQPKRTKFRKRHKGRNRGLA) is disordered.

This sequence belongs to the universal ribosomal protein uL16 family. As to quaternary structure, part of the 50S ribosomal subunit.

Binds 23S rRNA and is also seen to make contacts with the A and possibly P site tRNAs. This chain is Large ribosomal subunit protein uL16, found in Buchnera aphidicola subsp. Acyrthosiphon kondoi (Acyrthosiphon kondoi symbiotic bacterium).